The following is a 133-amino-acid chain: MQPLRFLVLSPSGIKLDQAIISAQVKTTNGYLGLNYNRAPLIAAVQSHFCKILFANNTRRNAIIGAGLVLIKKTEAKIFTENFVFEDEIDLEATLKRKAELERQMNHSKDLKLNIKIEQNLMFELLKLSNKQR.

The protein belongs to the ATPase epsilon chain family. As to quaternary structure, F-type ATPases have 2 components, CF(1) - the catalytic core - and CF(0) - the membrane proton channel. CF(1) has five subunits: alpha(3), beta(3), gamma(1), delta(1), epsilon(1). CF(0) has three main subunits: a, b and c.

Its subcellular location is the cell membrane. Functionally, produces ATP from ADP in the presence of a proton gradient across the membrane. This Mycoplasma pneumoniae (strain ATCC 29342 / M129 / Subtype 1) (Mycoplasmoides pneumoniae) protein is ATP synthase epsilon chain (atpC).